The following is a 541-amino-acid chain: GMP synthase [glutamine-hydrolyzing] (541 aa).

The 196-residue stretch at 17–212 folds into the Glutamine amidotransferase type-1 domain; the sequence is TILVLDFGSQ…AVDICQSTTD (196 aa). Cys93 (nucleophile) is an active-site residue. Active-site residues include His186 and Glu188. The GMPS ATP-PPase domain occupies 213–416; it reads WTMGKFVDQE…LGIPEDLVWR (204 aa). Position 241–247 (241–247) interacts with ATP; it reads SGGVDST. XMP-binding residues include Arg315, Asp478, Lys533, and Glu539.

As to quaternary structure, homodimer. The cofactor is Mg(2+).

The protein localises to the cytoplasm. It localises to the cytosol. It catalyses the reaction XMP + L-glutamine + ATP + H2O = GMP + L-glutamate + AMP + diphosphate + 2 H(+). It participates in purine metabolism; GMP biosynthesis; GMP from XMP (L-Gln route): step 1/1. Its function is as follows. Catalyzes the conversion of xanthine monophosphate (XMP) to GMP in the presence of glutamine and ATP through an adenyl-XMP intermediate. This is GMP synthase [glutamine-hydrolyzing] (GUA1) from Phaeosphaeria nodorum (strain SN15 / ATCC MYA-4574 / FGSC 10173) (Glume blotch fungus).